Here is a 282-residue protein sequence, read N- to C-terminus: Probable endonuclease 4 (282 aa).

His69, His109, Glu145, Asp179, His182, His216, Asp229, His231, and Glu261 together coordinate Zn(2+).

This sequence belongs to the AP endonuclease 2 family. Requires Zn(2+) as cofactor.

The enzyme catalyses Endonucleolytic cleavage to 5'-phosphooligonucleotide end-products.. Endonuclease IV plays a role in DNA repair. It cleaves phosphodiester bonds at apurinic or apyrimidinic (AP) sites, generating a 3'-hydroxyl group and a 5'-terminal sugar phosphate. This is Probable endonuclease 4 from Magnetococcus marinus (strain ATCC BAA-1437 / JCM 17883 / MC-1).